Consider the following 429-residue polypeptide: GTPase Obg (429 aa).

An Obg domain is found at 1 to 158 (MFVDQVKIYV…RNVQLELKVL (158 aa)). Positions 124–145 (RGNKRFATPANPAPELSENGEP) are disordered. In terms of domain architecture, OBG-type G spans 159–329 (ADVGLVGFPS…LLLAIADKLE (171 aa)). GTP-binding positions include 165 to 172 (GFPSVGKS), 190 to 194 (FTTIV), 212 to 215 (DLPG), 282 to 285 (NKMD), and 310 to 312 (SAV). Residues S172 and T192 each coordinate Mg(2+). An OCT domain is found at 351–429 (KYVAEEPDFE…LLDYEFEFMD (79 aa)).

This sequence belongs to the TRAFAC class OBG-HflX-like GTPase superfamily. OBG GTPase family. In terms of assembly, monomer. The cofactor is Mg(2+).

It localises to the cytoplasm. An essential GTPase which binds GTP, GDP and possibly (p)ppGpp with moderate affinity, with high nucleotide exchange rates and a fairly low GTP hydrolysis rate. Plays a role in control of the cell cycle, stress response, ribosome biogenesis and in those bacteria that undergo differentiation, in morphogenesis control. The chain is GTPase Obg from Listeria monocytogenes serotype 4b (strain F2365).